A 468-amino-acid chain; its full sequence is Gasdermin-C (468 aa).

A triggers pyroptosis region spans residues 1–230 (MSYTFDWLSK…CVILTSANTK (230 aa)).

This sequence belongs to the gasdermin family. In terms of assembly, homooligomer; homooligomeric ring-shaped pore complex containing 27-28 subunits when inserted in the membrane. In terms of processing, cleavage by CASP8 relieves autoinhibition by releasing the N-terminal moiety (Gasdermin-C, N-terminal) that initiates pyroptosis. Palmitoylated.

Its subcellular location is the cytoplasm. It localises to the cytosol. The protein resides in the cell membrane. Its activity is regulated as follows. The full-length protein before cleavage is inactive: intramolecular interactions between N- and C-terminal domains mediate autoinhibition in the absence of activation signal. The intrinsic pyroptosis-inducing activity is carried by the released N-terminal moiety (Gasdermin-C, N-terminal) following cleavage by caspase CASP8. Functionally, this form constitutes the precursor of the pore-forming protein: upon cleavage, the released N-terminal moiety (Gasdermin-C, N-terminal) binds to membranes and forms pores, triggering pyroptosis. Its function is as follows. Pore-forming protein that causes membrane permeabilization and pyroptosis. Produced by the cleavage of gasdermin-C by caspase CASP8 in response to death signals. After cleavage, moves to the plasma membrane where it strongly binds to membrane inner leaflet lipids. Homooligomerizes within the membrane and forms pores of 10-15 nanometers (nm) of inner diameter, triggering pyroptosis. The polypeptide is Gasdermin-C (Mus musculus (Mouse)).